The following is a 70-amino-acid chain: Putative membrane protein insertion efficiency factor (70 aa).

This sequence belongs to the UPF0161 family.

It is found in the cell membrane. Functionally, could be involved in insertion of integral membrane proteins into the membrane. This chain is Putative membrane protein insertion efficiency factor, found in Clostridium novyi (strain NT).